The following is a 165-amino-acid chain: U11/U12 small nuclear ribonucleoprotein 25 kDa protein (165 aa).

A Ubiquitin-like domain is found at 52 to 137 (MRLSVVKLDG…IRNNSQVTFM (86 aa)). The tract at residues 145-165 (RGRHSKRKKHRLFRSLHKTSS) is disordered.

Component of the U11/U12 snRNPs that are part of the U12-type spliceosome.

The protein localises to the nucleus. This is U11/U12 small nuclear ribonucleoprotein 25 kDa protein (SNRNP25) from Arabidopsis thaliana (Mouse-ear cress).